The primary structure comprises 482 residues: tRNA sulfurtransferase (482 aa).

Residues 61–165 (SAIRDALTRI…QDRLLLIKGR (105 aa)) enclose the THUMP domain. ATP contacts are provided by residues 183-184 (LI), lysine 265, glycine 287, and glutamine 296. An intrachain disulfide couples cysteine 344 to cysteine 456. A Rhodanese domain is found at 404 to 482 (FAPTDVLLDI…GFSNVKVYRP (79 aa)). The active-site Cysteine persulfide intermediate is the cysteine 456.

It belongs to the ThiI family.

It localises to the cytoplasm. The enzyme catalyses [ThiI sulfur-carrier protein]-S-sulfanyl-L-cysteine + a uridine in tRNA + 2 reduced [2Fe-2S]-[ferredoxin] + ATP + H(+) = [ThiI sulfur-carrier protein]-L-cysteine + a 4-thiouridine in tRNA + 2 oxidized [2Fe-2S]-[ferredoxin] + AMP + diphosphate. The catalysed reaction is [ThiS sulfur-carrier protein]-C-terminal Gly-Gly-AMP + S-sulfanyl-L-cysteinyl-[cysteine desulfurase] + AH2 = [ThiS sulfur-carrier protein]-C-terminal-Gly-aminoethanethioate + L-cysteinyl-[cysteine desulfurase] + A + AMP + 2 H(+). The protein operates within cofactor biosynthesis; thiamine diphosphate biosynthesis. Its function is as follows. Catalyzes the ATP-dependent transfer of a sulfur to tRNA to produce 4-thiouridine in position 8 of tRNAs, which functions as a near-UV photosensor. Also catalyzes the transfer of sulfur to the sulfur carrier protein ThiS, forming ThiS-thiocarboxylate. This is a step in the synthesis of thiazole, in the thiamine biosynthesis pathway. The sulfur is donated as persulfide by IscS. In Pectobacterium carotovorum subsp. carotovorum (strain PC1), this protein is tRNA sulfurtransferase.